Consider the following 557-residue polypeptide: uncharacterized protein (557 aa).

The signal sequence occupies residues 1–30 (MAPRRRRHTRIAGLRVVGTATLVAATTLTA). Cys31 carries the N-palmitoyl cysteine lipid modification. Residue Cys31 is the site of S-diacylglycerol cysteine attachment.

This sequence to M.bovis Mb2616c and M.leprae ML0489.

It localises to the cell membrane. This is an uncharacterized protein from Mycobacterium tuberculosis (strain ATCC 25618 / H37Rv).